A 614-amino-acid chain; its full sequence is Vitamin B12 transporter BtuB (614 aa).

The signal sequence occupies residues 1 to 20 (MIKKATLLTAFSVTAFSAWA). The short motif at 26-33 (DTLVVTAN) is the TonB box element. In terms of domain architecture, TBDR plug spans 38–152 (PRSAVLAPVT…IGGVVNIITT (115 aa)). Cyanocob(III)alamin contacts are provided by residues Ser-85, Asn-92, and 110–111 (VS). In terms of domain architecture, TBDR beta-barrel spans 155-614 (NPGTELTAGW…EYTLSGSYTF (460 aa)). A run of 3 beta stranded transmembrane segments spans residues 158–165 (TELTAGWG), 169–178 (YQNYDISTQQ), and 184–195 (TRATLIGDYEYT). Positions 199, 211, 213, and 215 each coordinate Ca(2+). 2 beta stranded membrane passes run 217–227 (FLSKTLYGALE) and 232–248 (DRWS…NRTD). Residues Tyr-249 and Asp-250 each coordinate Ca(2+). Ala-251 is a cyanocob(III)alamin binding site. A Ca(2+)-binding site is contributed by Asp-261. A run of 14 beta stranded transmembrane segments spans residues 263 to 277 (RKLY…LHFN), 279 to 296 (ERIQ…KDYN), 309 to 325 (TLDE…NSVV), 328 to 337 (HGNVGAGVDW), 353 to 369 (YDQR…QQLG), 371 to 381 (FTLEAAARSDD), 385 to 400 (FGRH…WEFI), 403 to 417 (YRFI…KAPN), 434 to 443 (KSKQWEGAFE), 449 to 458 (VSWRISGYRN), 473 to 490 (YYNE…TANF), 494 to 509 (PLTH…ARNA), 517 to 529 (RRSK…QLDW), and 535 to 550 (DWGM…YDSD). Thr-309 is a cyanocob(III)alamin binding site. Arg-517 is a binding site for cyanocob(III)alamin. Tyr-551 is a cyanocob(III)alamin binding site. Beta stranded transmembrane passes span 558–572 (TVKM…LTVA), 585–596 (IANLFDKDYETV), and 602–614 (AGRE…SYTF). Positions 597 to 614 (YGYQTAGREYTLSGSYTF) match the TonB C-terminal box motif.

Belongs to the TonB-dependent receptor family. BtuB (TC 1.B.14.3.1) subfamily.

The protein localises to the cell outer membrane. Functionally, involved in the active translocation of vitamin B12 (cyanocobalamin) across the outer membrane to the periplasmic space. It derives its energy for transport by interacting with the trans-periplasmic membrane protein TonB. The sequence is that of Vitamin B12 transporter BtuB from Salmonella typhimurium (strain LT2 / SGSC1412 / ATCC 700720).